Reading from the N-terminus, the 275-residue chain is 2,3,4,5-tetrahydropyridine-2,6-dicarboxylate N-succinyltransferase (275 aa).

Residues Arg108 and Asp145 each coordinate substrate.

It belongs to the transferase hexapeptide repeat family. In terms of assembly, homotrimer.

Its subcellular location is the cytoplasm. It carries out the reaction (S)-2,3,4,5-tetrahydrodipicolinate + succinyl-CoA + H2O = (S)-2-succinylamino-6-oxoheptanedioate + CoA. It participates in amino-acid biosynthesis; L-lysine biosynthesis via DAP pathway; LL-2,6-diaminopimelate from (S)-tetrahydrodipicolinate (succinylase route): step 1/3. The chain is 2,3,4,5-tetrahydropyridine-2,6-dicarboxylate N-succinyltransferase from Jannaschia sp. (strain CCS1).